Consider the following 132-residue polypeptide: Small ribosomal subunit protein uS8 (132 aa).

This sequence belongs to the universal ribosomal protein uS8 family. In terms of assembly, part of the 30S ribosomal subunit. Contacts proteins S5 and S12.

In terms of biological role, one of the primary rRNA binding proteins, it binds directly to 16S rRNA central domain where it helps coordinate assembly of the platform of the 30S subunit. This Psychrobacter arcticus (strain DSM 17307 / VKM B-2377 / 273-4) protein is Small ribosomal subunit protein uS8.